The primary structure comprises 80 residues: ATP synthase F(1) complex subunit delta, mitochondrial (80 aa).

A mitochondrion-targeting transit peptide spans 1 to 22 (MLPATLLRXSGLGRVVRQARAY).

It belongs to the ATPase epsilon chain family. In terms of assembly, component of the ATP synthase complex composed at least of ATP5F1A/subunit alpha, ATP5F1B/subunit beta, ATP5MC1/subunit c (homooctomer), MT-ATP6/subunit a, MT-ATP8/subunit 8, ATP5ME/subunit e, ATP5MF/subunit f, ATP5MG/subunit g, ATP5MK/subunit k, ATP5MJ/subunit j, ATP5F1C/subunit gamma, ATP5F1D/subunit delta, ATP5F1E/subunit epsilon, ATP5PF/subunit F6, ATP5PB/subunit b, ATP5PD/subunit d, ATP5PO/subunit OSCP. ATP synthase complex consists of a soluble F(1) head domain (subunits alpha(3) and beta(3)) - the catalytic core - and a membrane F(0) domain - the membrane proton channel (subunits c, a, 8, e, f, g, k and j). These two domains are linked by a central stalk (subunits gamma, delta, and epsilon) rotating inside the F1 region and a stationary peripheral stalk (subunits F6, b, d, and OSCP). Component of a complex composed at least by ATPIF1, ATP5F1A, ATP5F1B, ATP5F1C AND ATP5F1E.

The protein resides in the mitochondrion. It localises to the mitochondrion inner membrane. Subunit delta, of the mitochondrial membrane ATP synthase complex (F(1)F(0) ATP synthase or Complex V) that produces ATP from ADP in the presence of a proton gradient across the membrane which is generated by electron transport complexes of the respiratory chain. ATP synthase complex consist of a soluble F(1) head domain - the catalytic core - and a membrane F(1) domain - the membrane proton channel. These two domains are linked by a central stalk rotating inside the F(1) region and a stationary peripheral stalk. During catalysis, ATP synthesis in the catalytic domain of F(1) is coupled via a rotary mechanism of the central stalk subunits to proton translocation. In vivo, can only synthesize ATP although its ATP hydrolase activity can be activated artificially in vitro. With the central stalk subunit gamma, is essential for the biogenesis of F(1) catalytic part of the ATP synthase complex namely in the formation of F1 assembly intermediate. The polypeptide is ATP synthase F(1) complex subunit delta, mitochondrial (Sus scrofa (Pig)).